Reading from the N-terminus, the 186-residue chain is Ribosome-recycling factor (186 aa).

It belongs to the RRF family.

The protein localises to the cytoplasm. Responsible for the release of ribosomes from messenger RNA at the termination of protein biosynthesis. May increase the efficiency of translation by recycling ribosomes from one round of translation to another. The sequence is that of Ribosome-recycling factor from Janthinobacterium sp. (strain Marseille) (Minibacterium massiliensis).